The following is a 228-amino-acid chain: 7-cyano-7-deazaguanine synthase (228 aa).

Position 10-20 (10-20) interacts with ATP; that stretch reads FSGGQDSTTLA. Residues cysteine 190, cysteine 205, cysteine 208, and cysteine 211 each contribute to the Zn(2+) site.

It belongs to the QueC family. The cofactor is Zn(2+).

It catalyses the reaction 7-carboxy-7-deazaguanine + NH4(+) + ATP = 7-cyano-7-deazaguanine + ADP + phosphate + H2O + H(+). It functions in the pathway purine metabolism; 7-cyano-7-deazaguanine biosynthesis. Its function is as follows. Catalyzes the ATP-dependent conversion of 7-carboxy-7-deazaguanine (CDG) to 7-cyano-7-deazaguanine (preQ(0)). The polypeptide is 7-cyano-7-deazaguanine synthase (Helicobacter pylori (strain P12)).